The sequence spans 717 residues: Cleavage stimulation factor subunit 3 (717 aa).

Residue Ser-2 is modified to N-acetylserine. HAT repeat units follow at residues 45-77, 79-110, 117-152, 163-196, 221-261, 271-303, 319-352, 354-387, and 458-494; these read QPID…AEIK, KNYD…YVRE, SYKE…FLKG, QRIT…YEEG, KEYE…WEKS, LITK…YLEQ, LFSD…YEES, MKYE…FARR, and NEDN…FESN. The disordered stretch occupies residues 684 to 705; it reads VKRPNEDSDEDEEKGAVVPPVH. Ser-691 is modified (phosphoserine).

As to quaternary structure, homodimer. The CSTF complex is composed of CSTF1 (50 kDa subunit), CSTF2 (64 kDa subunit) and CSTF3 (77 kDa subunit). CSTF3 directly interacts with CSTF1 and CSTF2. Interacts with FIP1L1.

Its subcellular location is the nucleus. In terms of biological role, one of the multiple factors required for polyadenylation and 3'-end cleavage of mammalian pre-mRNAs. This Homo sapiens (Human) protein is Cleavage stimulation factor subunit 3 (CSTF3).